A 122-amino-acid polypeptide reads, in one-letter code: Large ribosomal subunit protein uL14 (122 aa).

It belongs to the universal ribosomal protein uL14 family. As to quaternary structure, part of the 50S ribosomal subunit. Forms a cluster with proteins L3 and L19. In the 70S ribosome, L14 and L19 interact and together make contacts with the 16S rRNA in bridges B5 and B8.

Binds to 23S rRNA. Forms part of two intersubunit bridges in the 70S ribosome. This chain is Large ribosomal subunit protein uL14, found in Staphylococcus aureus (strain MW2).